Here is a 201-residue protein sequence, read N- to C-terminus: MARGPRYRVPFRRRREGKTNYHKRLKLLKSKKPRLVVRKSLNHHIAQIIVYNPKGDRTIVSAHTRELIRDFGWKGHTGNTPSAYLLGLLIGYKAKKAGIEEAILDIGLHPPTRGSSVFAVLKGAVDAGLNVPHSEEIFPEDYRIRGEHVAEYAKALKQEDETLYRKQFGGYLVKGLEPEKLPEHFEEVKAKIIEKFEGARE.

This sequence belongs to the universal ribosomal protein uL18 family. As to quaternary structure, part of the 50S ribosomal subunit. Contacts the 5S and 23S rRNAs.

This is one of the proteins that bind and probably mediate the attachment of the 5S RNA into the large ribosomal subunit, where it forms part of the central protuberance. The sequence is that of Large ribosomal subunit protein uL18 from Thermococcus gammatolerans (strain DSM 15229 / JCM 11827 / EJ3).